Consider the following 1402-residue polypeptide: Roundabout homolog 3 (1402 aa).

The signal sequence occupies residues 1 to 20 (MLRYLLKTLLQMNLFADSLA). The Extracellular segment spans residues 21–891 (RDISNSSELL…ERLAKVLRKP (871 aa)). N25, N34, and N53 each carry an N-linked (GlcNAc...) asparagine glycan. Ig-like C2-type domains are found at residues 64-160 (PRIV…ASLE), 166-253 (DDFR…AELV), 258-342 (PSFL…GSLS), 347-440 (PQFV…ALLE), and 450-531 (PPII…GEAT). Cysteines 85 and 143 form a disulfide. The N-linked (GlcNAc...) asparagine glycan is linked to N156. 2 disulfide bridges follow: C187–C236 and C279–C326. 5 N-linked (GlcNAc...) asparagine glycosylation sites follow: N355, N363, N410, N459, and N503. A disulfide bridge links C368 with C424. C472 and C521 are disulfide-bonded. Disordered regions lie at residues 540 to 561 (EDWGASPGPATGPSNPPGPPSQ) and 639 to 662 (EPSPVSEPVQTQDSSLSRPAEDPW). Positions 543–552 (GASPGPATGP) are enriched in low complexity. Fibronectin type-III domains follow at residues 558 to 652 (PPSQ…TQDS), 672 to 766 (AVRM…IPEE), and 771 to 869 (PPQG…FPPA). The segment covering 646–655 (PVQTQDSSLS) has biased composition (polar residues). Residues N784, N813, and N820 are each glycosylated (N-linked (GlcNAc...) asparagine). The helical transmembrane segment at 892 to 912 (AFLAGSSAACGALLLGFCAAL) threads the bilayer. Over 913–1402 (YRRQKQRKEL…PGRNRREEPR (490 aa)) the chain is Cytoplasmic. Disordered stretches follow at residues 965-989 (SWPHPPRSPSAQEPRGSCCPSNPDP), 1032-1307 (FHGG…VVQA), and 1340-1402 (GRPS…EEPR). 2 stretches are compositionally biased toward polar residues: residues 1038–1049 (QHSSGDPSTWSQ) and 1142–1152 (PSPTSSYGQQS). The segment covering 1158-1169 (PSPPDPPQPPTD) has biased composition (pro residues). Composition is skewed to low complexity over residues 1178–1191 (RRVPLGPSSPLSVS) and 1215–1228 (ASPSPVPSTASSAP). Residues 1243 to 1254 (HGHRARIRKKPK) show a composition bias toward basic residues. Residue S1263 is modified to Phosphoserine. Positions 1294 to 1304 (LERERSGERRV) are enriched in basic and acidic residues. The segment covering 1346–1357 (SHGQGTSTCSTA) has biased composition (polar residues). Positions 1358-1371 (GSNSSRGSNSSRGS) are enriched in low complexity.

It belongs to the immunoglobulin superfamily. ROBO family. In terms of assembly, interacts (via Fibronectin type-III 1 domain) with NELL2 (via the EGF domains) with a 3:3 stoichiometry; this interaction promotes oligomerization of ROBO3 resulting in the repulsion of commissural axons in the midline. In terms of tissue distribution, detected in embryonal spinal cord and hindbrain.

Its subcellular location is the membrane. Its function is as follows. Receptor involved in axon guidance during development. Acts as a multifunctional regulator of pathfinding that simultaneously mediates NELL2 repulsion, inhibits SLIT repulsion, and facilitates Netrin-1/NTN1 attraction. In spinal cord development plays a role in guiding commissural axons probably by preventing premature sensitivity to Slit proteins thus inhibiting Slit signaling through ROBO1/ROBO2. Binding OF NELL2 to the receptor ROBO3 promotes oligomerization of ROBO3, resulting in the repulsion of commissural axons in the midline. ROBO3 also indirectly boosts axon attraction to NTN1 without interacting with NTN1 itself. Mediates NELL2 premature repulsion of commissural axons during midline crossing. In terms of biological role, after midline crossing by the commissural axons, may, in concert with ROBO1 and ROBO2, prevent midline recrossing. Does not mediate NELL2 signaling. In Mus musculus (Mouse), this protein is Roundabout homolog 3.